Here is a 324-residue protein sequence, read N- to C-terminus: MTKTIFESKTEGNWFLGSFQAFNYFTCFGNDESYEAIQDVFHRLLSTLKVEGLQLHVVQMTSDFQLLAFLVDMINQEYSRHIKVTQHKGAILVSEDDQLFLVHLPKEGTSLEKFFDLKNDNNFGDTILIATHNEGKTKEFRELFGKLGLKVENLNDYPDLPEVEETGMTFEENARLKAETISKLTGKMVISDDSGLKVDALGGLPGVWSARFSGPDATDARNNAKLLHELAMVFDKERRSAQFHTTLVVSAPNKESLVVEAEWPGYIGTEPKGENGFGYDPLFIVGEGSRTAAELSAQEKNNLSHRGQAVRKLMEVFPKWQLEN.

Positions 1–127 (MTKTIFESKT…KNDNNFGDTI (127 aa)) are unknown. Residues 128–324 (LIATHNEGKT…EVFPKWQLEN (197 aa)) form an NTP pyrophosphatase region. 131–136 (THNEGK) contacts substrate. Mg(2+) is bound by residues glutamate 164 and aspartate 193. Residue aspartate 193 is the Proton acceptor of the active site. Residues serine 194, 277–280 (FGYD), lysine 300, and 305–306 (HR) each bind substrate.

Belongs to the HAM1 NTPase family. Homodimer. The cofactor is Mg(2+).

The enzyme catalyses XTP + H2O = XMP + diphosphate + H(+). The catalysed reaction is dITP + H2O = dIMP + diphosphate + H(+). It carries out the reaction ITP + H2O = IMP + diphosphate + H(+). Its function is as follows. Pyrophosphatase that catalyzes the hydrolysis of nucleoside triphosphates to their monophosphate derivatives, with a high preference for the non-canonical purine nucleotides XTP (xanthosine triphosphate), dITP (deoxyinosine triphosphate) and ITP. Seems to function as a house-cleaning enzyme that removes non-canonical purine nucleotides from the nucleotide pool, thus preventing their incorporation into DNA/RNA and avoiding chromosomal lesions. This Streptococcus agalactiae serotype III (strain NEM316) protein is dITP/XTP pyrophosphatase.